The primary structure comprises 304 residues: Putative ankyrin repeat protein R598 (304 aa).

ANK repeat units follow at residues 7–36, 77–107, 122–151, 152–181, 183–209, 210–239, and 265–293; these read NIVT…SINL, YIST…PVDF, GSNH…DVNA, HNYL…NVLR, ANGN…EIDM, NLSR…DINK, and FDFT…NVDI.

In Acanthamoeba polyphaga (Amoeba), this protein is Putative ankyrin repeat protein R598.